We begin with the raw amino-acid sequence, 529 residues long: uncharacterized protein (529 aa).

Residues 1-20 form the signal peptide; that stretch reads MYFLILILVLLLIMVAAATA.

This is an uncharacterized protein from Orgyia pseudotsugata multicapsid polyhedrosis virus (OpMNPV).